A 375-amino-acid polypeptide reads, in one-letter code: MRTRVAELLGAEFPICAFSHCRDVVAAVSNAGGFGILGAVAHSPKRLESELTWIEEHTGGKPYGVDVLLPPKYIGAEQGGIDAQQARELIPEGHRTFVDDLLVRYGIPAVTDRQRSSSAGGLHISPKGYQPLLDVAFAHDIRLIASALGPPPPDLVERAHNHDVLVAALAGTAQHARRHAAAGVDLIVAQGTEAGGHTGEVATMVLVPEVVDAVSPTPVLAAGGIARGRQIAAALALGAEGVWCGSVWLTTEEAETPPVVKDKFLAATSSDTVRSRSLTGKPARMLRTAWTDEWDRPDSPDPLGMPLQSALVSDPQLRINQAAGQPGAKARELATYFVGQVVGSLDRVRSARSVVLDMVEEFIDTVGQLQGLVQR.

FMN-binding positions include glutamine 190, glycine 195, glycine 224, and 243–246; that span reads WCGS.

Belongs to the nitronate monooxygenase family. FMN is required as a cofactor.

In Mycobacterium tuberculosis (strain ATCC 25618 / H37Rv), this protein is Putative monooxygenase Rv1533.